The sequence spans 313 residues: Porphobilinogen deaminase (313 aa).

Cys243 is modified (S-(dipyrrolylmethanemethyl)cysteine).

It belongs to the HMBS family. In terms of assembly, monomer. Dipyrromethane is required as a cofactor.

The enzyme catalyses 4 porphobilinogen + H2O = hydroxymethylbilane + 4 NH4(+). The protein operates within porphyrin-containing compound metabolism; protoporphyrin-IX biosynthesis; coproporphyrinogen-III from 5-aminolevulinate: step 2/4. Functionally, tetrapolymerization of the monopyrrole PBG into the hydroxymethylbilane pre-uroporphyrinogen in several discrete steps. The chain is Porphobilinogen deaminase from Bordetella petrii (strain ATCC BAA-461 / DSM 12804 / CCUG 43448).